The following is an 85-amino-acid chain: Large ribosomal subunit protein bL27 (85 aa).

Residues Met-1 to Lys-24 are disordered.

The protein belongs to the bacterial ribosomal protein bL27 family.

In Geotalea daltonii (strain DSM 22248 / JCM 15807 / FRC-32) (Geobacter daltonii), this protein is Large ribosomal subunit protein bL27.